We begin with the raw amino-acid sequence, 288 residues long: 4-diphosphocytidyl-2-C-methyl-D-erythritol kinase (288 aa).

The active site involves Lys-10. 99 to 109 (PMGGGLGGGSS) is a binding site for ATP. Asp-141 is a catalytic residue.

It belongs to the GHMP kinase family. IspE subfamily. As to quaternary structure, homodimer.

The catalysed reaction is 4-CDP-2-C-methyl-D-erythritol + ATP = 4-CDP-2-C-methyl-D-erythritol 2-phosphate + ADP + H(+). It functions in the pathway isoprenoid biosynthesis; isopentenyl diphosphate biosynthesis via DXP pathway; isopentenyl diphosphate from 1-deoxy-D-xylulose 5-phosphate: step 3/6. Catalyzes the phosphorylation of the position 2 hydroxy group of 4-diphosphocytidyl-2C-methyl-D-erythritol. The polypeptide is 4-diphosphocytidyl-2-C-methyl-D-erythritol kinase (Serratia proteamaculans (strain 568)).